An 84-amino-acid chain; its full sequence is Putative membrane protein insertion efficiency factor (84 aa).

This sequence belongs to the UPF0161 family.

The protein localises to the cell inner membrane. In terms of biological role, could be involved in insertion of integral membrane proteins into the membrane. The sequence is that of Putative membrane protein insertion efficiency factor from Shewanella pealeana (strain ATCC 700345 / ANG-SQ1).